The sequence spans 97 residues: Large ribosomal subunit protein bL28 (97 aa).

A disordered region spans residues 1 to 20 (MSRRCELTAKGPQVGHKVSH).

This sequence belongs to the bacterial ribosomal protein bL28 family.

The polypeptide is Large ribosomal subunit protein bL28 (Afipia carboxidovorans (strain ATCC 49405 / DSM 1227 / KCTC 32145 / OM5) (Oligotropha carboxidovorans)).